Here is a 498-residue protein sequence, read N- to C-terminus: 3-octaprenyl-4-hydroxybenzoate carboxy-lyase (498 aa).

N175 lines the Mn(2+) pocket. Prenylated FMN contacts are provided by residues 178–180, 192–194, and 197–198; these read IYR, RWL, and RG. E241 serves as a coordination point for Mn(2+). D290 acts as the Proton donor in catalysis.

Belongs to the UbiD family. Homohexamer. It depends on prenylated FMN as a cofactor. Mn(2+) is required as a cofactor.

It is found in the cell membrane. The enzyme catalyses a 4-hydroxy-3-(all-trans-polyprenyl)benzoate + H(+) = a 2-(all-trans-polyprenyl)phenol + CO2. The protein operates within cofactor biosynthesis; ubiquinone biosynthesis. In terms of biological role, catalyzes the decarboxylation of 3-octaprenyl-4-hydroxy benzoate to 2-octaprenylphenol, an intermediate step in ubiquinone biosynthesis. The protein is 3-octaprenyl-4-hydroxybenzoate carboxy-lyase of Pectobacterium atrosepticum (strain SCRI 1043 / ATCC BAA-672) (Erwinia carotovora subsp. atroseptica).